The sequence spans 474 residues: MKSIILFVLSLLLILEKQAAVMGQKGGSKGQLPSGSSQFPHGQKGQHYFGQKDQQHTKSKGSFSIQHTYHVDINDHDRTRKSQQYDLNALHKATKSKQHLGGSQQLLNYKQEGRDHDKSKGHFHMIVIHHKGGQAHRGTQNPSQDQGNSPSGKGLSSQYSNTEKRLWVHGLSKEQASASGAQKGRTQGGSQSSYVLQTEELVVNKQQRETKNSHQNKGHYQNAVDVREEHSSKLQTSLHPAHQDRLQHGSKDIFTTQDELLVYNKNQHQTKNLNQDQEHGQKAHKISYQSSRTEERQLNHGEKSVQKDVSKGSISIQTEKKIHGKSQNQVTIHSQDQEHGHKENKMSHQSSSTEERHLNCGEKGIQKGVSKGSISIQTEEQIHGKSQNQVRIPSQAQEYGHKENKISYRSSSTEERRLNSGEKDVQKGVSKGSISIQTEEKIHGKSQNQVTIPSQDQEHGHKENKMSYQSSSTE.

Positions 1 to 23 are cleaved as a signal peptide; sequence MKSIILFVLSLLLILEKQAAVMG. 5 disordered regions span residues 24 to 62, 132 to 158, 173 to 194, 226 to 247, and 272 to 474; these read QKGGSKGQLPSGSSQFPHGQKGQHYFGQKDQQHTKSKGS, GGQAHRGTQNPSQDQGNSPSGKGLSSQ, KEQASASGAQKGRTQGGSQSSY, VREEHSSKLQTSLHPAHQDRLQ, and NLNQ…SSTE. Composition is skewed to polar residues over residues 31–40, 137–158, and 174–194; these read QLPSGSSQFP, RGTQNPSQDQGNSPSGKGLSSQ, and EQASASGAQKGRTQGGSQSSY. A compositionally biased stretch (basic and acidic residues) spans 292–310; the sequence is RTEERQLNHGEKSVQKDVS. Residues 325 to 334 are compositionally biased toward polar residues; sequence KSQNQVTIHS. The span at 335-346 shows a compositional bias: basic and acidic residues; sequence QDQEHGHKENKM. Positions 372–397 are enriched in polar residues; that stretch reads GSISIQTEEQIHGKSQNQVRIPSQAQ. The span at 399-426 shows a compositional bias: basic and acidic residues; it reads YGHKENKISYRSSSTEERRLNSGEKDVQ. Residues 445–455 show a composition bias toward polar residues; that stretch reads KSQNQVTIPSQ. The segment covering 456 to 465 has biased composition (basic and acidic residues); that stretch reads DQEHGHKENK.

It belongs to the semenogelin family. In terms of assembly, interacts with SERPINA5.

The protein resides in the secreted. Functionally, participates in the formation of a gel matrix (sperm coagulum) entrapping the accessory gland secretions and ejaculated spermatozoa. The protein is Semenogelin-2 (SEMG2) of Gorilla gorilla gorilla (Western lowland gorilla).